Reading from the N-terminus, the 137-residue chain is Pro-corazonin (137 aa).

The N-terminal stretch at methionine 1–alanine 20 is a signal peptide. Glutamine 21 carries the post-translational modification Pyrrolidone carboxylic acid. Asparagine 31 carries the post-translational modification Asparagine amide. Positions phenylalanine 68–leucine 137 are excised as a propeptide.

This sequence belongs to the corazonin family.

The protein localises to the secreted. Cardioactive peptide. Corazonin is probably involved in the physiological regulation of the heart beat. This Aedes aegypti (Yellowfever mosquito) protein is Pro-corazonin.